Reading from the N-terminus, the 611-residue chain is Dihydroxy-acid dehydratase (611 aa).

Residue Asp-81 participates in Mg(2+) binding. Cys-122 contacts [2Fe-2S] cluster. Residues Asp-123 and Lys-124 each coordinate Mg(2+). An N6-carboxylysine modification is found at Lys-124. A [2Fe-2S] cluster-binding site is contributed by Cys-195. Residue Glu-491 participates in Mg(2+) binding. The active-site Proton acceptor is the Ser-517.

This sequence belongs to the IlvD/Edd family. In terms of assembly, homodimer. [2Fe-2S] cluster is required as a cofactor. The cofactor is Mg(2+).

The catalysed reaction is (2R)-2,3-dihydroxy-3-methylbutanoate = 3-methyl-2-oxobutanoate + H2O. The enzyme catalyses (2R,3R)-2,3-dihydroxy-3-methylpentanoate = (S)-3-methyl-2-oxopentanoate + H2O. The protein operates within amino-acid biosynthesis; L-isoleucine biosynthesis; L-isoleucine from 2-oxobutanoate: step 3/4. It participates in amino-acid biosynthesis; L-valine biosynthesis; L-valine from pyruvate: step 3/4. In terms of biological role, functions in the biosynthesis of branched-chain amino acids. Catalyzes the dehydration of (2R,3R)-2,3-dihydroxy-3-methylpentanoate (2,3-dihydroxy-3-methylvalerate) into 2-oxo-3-methylpentanoate (2-oxo-3-methylvalerate) and of (2R)-2,3-dihydroxy-3-methylbutanoate (2,3-dihydroxyisovalerate) into 2-oxo-3-methylbutanoate (2-oxoisovalerate), the penultimate precursor to L-isoleucine and L-valine, respectively. The chain is Dihydroxy-acid dehydratase from Agrobacterium fabrum (strain C58 / ATCC 33970) (Agrobacterium tumefaciens (strain C58)).